A 214-amino-acid polypeptide reads, in one-letter code: Ribosomal RNA large subunit methyltransferase E (214 aa).

S-adenosyl-L-methionine is bound by residues Gly68, Trp70, Asp88, Asp104, and Asp129. Residue Lys169 is the Proton acceptor of the active site.

Belongs to the class I-like SAM-binding methyltransferase superfamily. RNA methyltransferase RlmE family.

Its subcellular location is the cytoplasm. The catalysed reaction is uridine(2552) in 23S rRNA + S-adenosyl-L-methionine = 2'-O-methyluridine(2552) in 23S rRNA + S-adenosyl-L-homocysteine + H(+). Functionally, specifically methylates the uridine in position 2552 of 23S rRNA at the 2'-O position of the ribose in the fully assembled 50S ribosomal subunit. This chain is Ribosomal RNA large subunit methyltransferase E, found in Magnetococcus marinus (strain ATCC BAA-1437 / JCM 17883 / MC-1).